The following is a 368-amino-acid chain: Serine/threonine-protein phosphatase PP2A-like PPG1 (368 aa).

Mn(2+) contacts are provided by aspartate 50, histidine 52, aspartate 78, and asparagine 110. Catalysis depends on histidine 111, which acts as the Proton donor. Mn(2+)-binding residues include histidine 161 and histidine 247.

The protein belongs to the PPP phosphatase family. PP-2A subfamily. In terms of assembly, inactivated in a complex with phosphatase methylesterase PPE1 (PP2Ai). Interacts with phosphatase 2A activator RRD1, which can reactivate PP2Ai by dissociating the catalytic subunit from the complex. Interacts with TAP42. Requires Mn(2+) as cofactor. Reversibly methyl esterified on Leu-368 by leucine carboxyl methyltransferase 1 (PPM1) and protein phosphatase methylesterase 1 (PPE1). Carboxyl methylation influences the affinity of the catalytic subunit for the different regulatory subunits, thereby modulating the PP2A holoenzyme's substrate specificity, enzyme activity and cellular localization.

It catalyses the reaction O-phospho-L-seryl-[protein] + H2O = L-seryl-[protein] + phosphate. It carries out the reaction O-phospho-L-threonyl-[protein] + H2O = L-threonyl-[protein] + phosphate. Functionally, involved in glycogen accumulation. This is Serine/threonine-protein phosphatase PP2A-like PPG1 (PPG1) from Saccharomyces cerevisiae (strain ATCC 204508 / S288c) (Baker's yeast).